Here is a 396-residue protein sequence, read N- to C-terminus: Inositol polyphosphate multikinase (396 aa).

Positions 1-13 are enriched in low complexity; it reads MAAEPPALRLRPP. The interval 1-22 is disordered; it reads MAAEPPALRLRPPGSTGDSPPV. The residue at position 2 (Ala2) is an N-acetylalanine. A Phosphoserine modification is found at Ser19. Lys58 is a binding site for ATP. Position 65 (Arg65) interacts with substrate. ATP-binding positions include 114 to 116 and Asp127; that span reads EDV. Substrate contacts are provided by residues Lys129, 143–150, and Gln179; that span reads KIQQQVSK. The Nuclear localization signal signature appears at 300–310; the sequence is RHRKLYAKKHQ. Asp365 lines the ATP pocket.

Belongs to the inositol phosphokinase (IPK) family. It depends on Mg(2+) as a cofactor. In terms of tissue distribution, highly expressed in kidney, and at lower levels in hippocampus, brain cortex, cerebellum, heart and lung.

It localises to the nucleus. The enzyme catalyses 1D-myo-inositol 1,4,5-trisphosphate + 2 ATP = 1D-myo-inositol 1,3,4,5,6-pentakisphosphate + 2 ADP + 2 H(+). The catalysed reaction is 1D-myo-inositol 1,3,4,6-tetrakisphosphate + ATP = 1D-myo-inositol 1,3,4,5,6-pentakisphosphate + ADP + H(+). It catalyses the reaction 1-octadecanoyl-2-(5Z,8Z,11Z,14Z)-eicosatetraenoyl-sn-glycero-3-phospho-1D-myo-inositol 4,5-bisphosphate + ATP = 1-octadecanoyl-2-(5Z,8Z,11Z,14Z-eicosatetraenoyl)-sn-glycero-3-phospho-(1D-myo-inositol 3,4,5-triphosphate) + ADP + H(+). It carries out the reaction a 1,2-diacyl-sn-glycero-3-phospho-(1D-myo-inositol-4,5-bisphosphate) + ATP = a 1,2-diacyl-sn-glycero-3-phospho-(1D-myo-inositol-3,4,5-trisphosphate) + ADP + H(+). The enzyme catalyses 1D-myo-inositol 1,4,5,6-tetrakisphosphate + ATP = 1D-myo-inositol 1,3,4,5,6-pentakisphosphate + ADP + H(+). It functions in the pathway phospholipid metabolism; phosphatidylinositol metabolism. Inositol phosphate kinase with a broad substrate specificity. Phosphorylates inositol 1,4,5-trisphosphate (Ins(1,4,5)P3) first to inositol 1,3,4,5-tetrakisphosphate and then to inositol 1,3,4,5,6-pentakisphosphate (Ins(1,3,4,5,6)P5). Phosphorylates inositol 1,3,4,6-tetrakisphosphate (Ins(1,3,4,6)P4). Phosphorylates inositol 1,4,5,6-tetrakisphosphate (Ins(1,4,5,6)P4). Phosphorylates glycero-3-phospho-1D-myo-inositol 4,5-bisphosphate to glycero-3-phospho-1D-myo-inositol 3,4,5-trisphosphate. Plays an important role in MLKL-mediated necroptosis via its role in the biosynthesis of inositol pentakisphosphate (InsP5) and inositol hexakisphosphate (InsP6). Binding of these highly phosphorylated inositol phosphates to MLKL mediates the release of an N-terminal auto-inhibitory region, leading to activation of the kinase. Essential for activated phospho-MLKL to oligomerize and localize to the cell membrane during necroptosis. Required for normal embryonic development, probably via its role in the biosynthesis of inositol 1,3,4,5,6-pentakisphosphate (Ins(1,3,4,5,6)P5) and inositol hexakisphosphate (InsP6). This Rattus norvegicus (Rat) protein is Inositol polyphosphate multikinase (Ipmk).